A 375-amino-acid chain; its full sequence is POU domain, class 3, transcription factor 1-B (375 aa).

Disordered regions lie at residues 1–29 (MAAT…RMHQ), 56–139 (MSLT…QPLI), and 151–200 (MLGP…PSSD). 3 stretches are compositionally biased toward polar residues: residues 107-117 (VHQQTPSSHAW), 129-139 (SPGSNSHQPLI), and 151-160 (MLGPQASSLH). Positions 162–178 (SMRDPLHDDPGVHDTHV) are enriched in basic and acidic residues. The POU-specific domain maps to 194-268 (EDAPSSDDLE…LLNKWLEETD (75 aa)). Positions 286–345 (KRKKRTSIEVGVKGALENHFLKCPKPSAHEITSLADSLQLEKEVVRVWFCNRRQKEKRMT) form a DNA-binding region, homeobox.

The protein belongs to the POU transcription factor family. Class-3 subfamily.

Its subcellular location is the nucleus. Its function is as follows. Acts as a transcription factor. May play a role in neuronal differentiation. In Xenopus laevis (African clawed frog), this protein is POU domain, class 3, transcription factor 1-B (pou3f1-b).